The chain runs to 130 residues: Protein YoeA (130 aa).

Residues 1-28 form the signal peptide; it reads MLYNIPCRIYILSTLSLCISGIVSTATA. Residues 51–130 enclose the TBDR plug domain; the sequence is NLWESPATIQ…RCRRYSRGER (80 aa).

It belongs to the TonB-dependent receptor family.

In Escherichia coli (strain K12), this protein is Protein YoeA (yoeA).